Consider the following 474-residue polypeptide: MTKKLHIKTWGCQMNEYDSSKMADLLGSTHGYELTEIAEEADVLLLNTCSIREKAQEKVFHQLGRWKALKDLNPNLIIGVGGCVASQEGAHIRERAHYVDVIFGPQTLHRLPEMINHVQGTRSPIVDISFPEIEKFDRLPEPRADGPTAFVSIMEGCNKYCTFCVVPYTRGEEVSRPCDDVLFEIAQLAAQGVREVNLLGQNVNAYRGETYDGEICSFAELLRLVAAIDGIDRVRFTTSHPIEFTDDIISVYEDTPELVSFLHLPVQSGSDRVLTMMKRRHTALEYKAIIRKLHNARPGILISSDFIIGFPGETQADFEQTMKLIADVNFDMSYSFVYSARPGTPAADMVDDVLEEEKKQRLYLLQDRITKQAMRFSRLMLGTVQRILVEGTSRKSVMELSGRTENNRVVNFEGTPDMIGKFVDVEIVDVYTNSLRGIVVRTEDQMDLRVHESPSSVIARTRKENEIGVGFYQP.

One can recognise an MTTase N-terminal domain in the interval 3–120 (KKLHIKTWGC…LPEMINHVQG (118 aa)). [4Fe-4S] cluster is bound by residues cysteine 12, cysteine 49, cysteine 83, cysteine 157, cysteine 161, and cysteine 164. The Radical SAM core domain occupies 143–375 (RADGPTAFVS…QDRITKQAMR (233 aa)). Residues 378–441 (RLMLGTVQRI…TNSLRGIVVR (64 aa)) form the TRAM domain.

This sequence belongs to the methylthiotransferase family. MiaB subfamily. As to quaternary structure, monomer. It depends on [4Fe-4S] cluster as a cofactor.

It is found in the cytoplasm. The catalysed reaction is N(6)-dimethylallyladenosine(37) in tRNA + (sulfur carrier)-SH + AH2 + 2 S-adenosyl-L-methionine = 2-methylsulfanyl-N(6)-dimethylallyladenosine(37) in tRNA + (sulfur carrier)-H + 5'-deoxyadenosine + L-methionine + A + S-adenosyl-L-homocysteine + 2 H(+). In terms of biological role, catalyzes the methylthiolation of N6-(dimethylallyl)adenosine (i(6)A), leading to the formation of 2-methylthio-N6-(dimethylallyl)adenosine (ms(2)i(6)A) at position 37 in tRNAs that read codons beginning with uridine. This chain is tRNA-2-methylthio-N(6)-dimethylallyladenosine synthase, found in Pectobacterium atrosepticum (strain SCRI 1043 / ATCC BAA-672) (Erwinia carotovora subsp. atroseptica).